A 319-amino-acid chain; its full sequence is Protein sprouty homolog 1 (319 aa).

Met1 is modified (N-acetylmethionine). Disordered stretches follow at residues 54–78 (TEGPSVVKRPAPRTAPRQEKHERTH) and 100–160 (AVLP…QPKQ). Residues 69–78 (PRQEKHERTH) are compositionally biased toward basic and acidic residues. The span at 112–131 (SRSTSTGSAASSGSNSSASS) shows a compositional bias: low complexity. An SPR domain is found at 183–295 (QCGKCKCGEC…CYDWIHRPGC (113 aa)).

It belongs to the sprouty family. Forms heterodimers with SPRY2. Interacts with TESK1. Interacts with CAV1 (via C-terminus).

The protein localises to the cytoplasm. Its subcellular location is the membrane. Inhibits fibroblast growth factor (FGF)-induced retinal lens fiber differentiation, probably by inhibiting FGF-mediated phosphorylation of ERK1/2. Inhibits TGFB-induced epithelial-to-mesenchymal transition in lens epithelial cells. This Homo sapiens (Human) protein is Protein sprouty homolog 1 (SPRY1).